The chain runs to 711 residues: Polyribonucleotide nucleotidyltransferase (711 aa).

The Mg(2+) site is built by aspartate 486 and aspartate 492. The 60-residue stretch at proline 553–isoleucine 612 folds into the KH domain. In terms of domain architecture, S1 motif spans glycine 622–lysine 690. The disordered stretch occupies residues isoleucine 689 to glutamate 711. A compositionally biased stretch (low complexity) spans glutamate 694–glutamate 711.

This sequence belongs to the polyribonucleotide nucleotidyltransferase family. In terms of assembly, component of the RNA degradosome, which is a multiprotein complex involved in RNA processing and mRNA degradation. Mg(2+) serves as cofactor.

It localises to the cytoplasm. It catalyses the reaction RNA(n+1) + phosphate = RNA(n) + a ribonucleoside 5'-diphosphate. Its function is as follows. Involved in mRNA degradation. Catalyzes the phosphorolysis of single-stranded polyribonucleotides processively in the 3'- to 5'-direction. The chain is Polyribonucleotide nucleotidyltransferase from Escherichia fergusonii (strain ATCC 35469 / DSM 13698 / CCUG 18766 / IAM 14443 / JCM 21226 / LMG 7866 / NBRC 102419 / NCTC 12128 / CDC 0568-73).